The primary structure comprises 318 residues: sn-1 stearoyl-lipid 9-desaturase (318 aa).

Helical transmembrane passes span 56–76 and 80–100; these read VIFF…PQFF and AVGM…TLGF. The Histidine box-1 motif lies at 101 to 106; that stretch reads HRCISH. The helical transmembrane segment at 117–137 threads the bilayer; sequence YIFVICGTLACQGGVFEWVGL. The short motif at 138-142 is the Histidine box-2 element; that stretch reads HRMHH. Residues 201-221 form a helical membrane-spanning segment; it reads VALGLILFALGGWPFVIWGIF. The short motif at 271 to 275 is the Histidine box-3 element; it reads HHAYQ.

The protein belongs to the fatty acid desaturase type 2 family. Fe(2+) is required as a cofactor.

It is found in the cellular thylakoid membrane. It catalyses the reaction a 1-octadecanoyl 2-acyl-glycerolipid + 2 reduced [2Fe-2S]-[ferredoxin] + O2 + 2 H(+) = a 1-[(9Z)-octadecenoyl]-2-acyl-glycerolipid + 2 oxidized [2Fe-2S]-[ferredoxin] + 2 H2O. Its pathway is lipid metabolism; polyunsaturated fatty acid biosynthesis. Desaturase involved in fatty acid biosynthesis. Introduces a double bond at carbon 9 of stearoyl groups (18:0) attached to the sn-1 position of the glycerol moiety of membrane glycerolipids. Does not desaturate palmitic acid (16:0), palmitoleic acid (16:1) and cis-vaccenic acid (18:1). This Synechocystis sp. (strain ATCC 27184 / PCC 6803 / Kazusa) protein is sn-1 stearoyl-lipid 9-desaturase.